A 330-amino-acid polypeptide reads, in one-letter code: Ferredoxin--NADP reductase (330 aa).

Residues T18, E37, Q45, Y50, V90, F124, D286, and T327 each contribute to the FAD site.

This sequence belongs to the ferredoxin--NADP reductase type 2 family. As to quaternary structure, homodimer. Requires FAD as cofactor.

It catalyses the reaction 2 reduced [2Fe-2S]-[ferredoxin] + NADP(+) + H(+) = 2 oxidized [2Fe-2S]-[ferredoxin] + NADPH. This Halalkalibacterium halodurans (strain ATCC BAA-125 / DSM 18197 / FERM 7344 / JCM 9153 / C-125) (Bacillus halodurans) protein is Ferredoxin--NADP reductase.